We begin with the raw amino-acid sequence, 176 residues long: Cytochrome b (176 aa).

Helical transmembrane passes span 33 to 53, 77 to 98, and 113 to 133; these read FGSL…FLAM, WMLR…YLHV, and WNVG…GYVL. Residues H83 and H97 each contribute to the heme b site.

The protein belongs to the cytochrome b family. As to quaternary structure, the cytochrome bc1 complex contains 11 subunits: 3 respiratory subunits (MT-CYB, CYC1 and UQCRFS1), 2 core proteins (UQCRC1 and UQCRC2) and 6 low-molecular weight proteins (UQCRH/QCR6, UQCRB/QCR7, UQCRQ/QCR8, UQCR10/QCR9, UQCR11/QCR10 and a cleavage product of UQCRFS1). This cytochrome bc1 complex then forms a dimer. The cofactor is heme b.

It localises to the mitochondrion inner membrane. Functionally, component of the ubiquinol-cytochrome c reductase complex (complex III or cytochrome b-c1 complex) that is part of the mitochondrial respiratory chain. The b-c1 complex mediates electron transfer from ubiquinol to cytochrome c. Contributes to the generation of a proton gradient across the mitochondrial membrane that is then used for ATP synthesis. This Idionycteris phyllotis (Allen's big-eared bat) protein is Cytochrome b (MT-CYB).